The following is a 241-amino-acid chain: Small ribosomal subunit protein uS2 (241 aa).

This sequence belongs to the universal ribosomal protein uS2 family.

The protein is Small ribosomal subunit protein uS2 of Yersinia pestis bv. Antiqua (strain Antiqua).